The sequence spans 228 residues: tRNA (guanine-N(1)-)-methyltransferase (228 aa).

S-adenosyl-L-methionine-binding positions include glycine 111 and 130 to 135 (IGDFVL).

The protein belongs to the RNA methyltransferase TrmD family. In terms of assembly, homodimer.

It is found in the cytoplasm. It carries out the reaction guanosine(37) in tRNA + S-adenosyl-L-methionine = N(1)-methylguanosine(37) in tRNA + S-adenosyl-L-homocysteine + H(+). Its function is as follows. Specifically methylates guanosine-37 in various tRNAs. This is tRNA (guanine-N(1)-)-methyltransferase from Ureaplasma urealyticum serovar 10 (strain ATCC 33699 / Western).